Reading from the N-terminus, the 177-residue chain is Cyclic pyranopterin monophosphate synthase 3 (177 aa).

Substrate-binding positions include 79–81 and 116–117; these read LCH and ME. Residue Asp131 is part of the active site. Residues 150-177 form a disordered region; sequence KSGGRSGHYRRHDADVKPSDGGSTEDGC.

Belongs to the MoaC family. Homohexamer; trimer of dimers.

It carries out the reaction (8S)-3',8-cyclo-7,8-dihydroguanosine 5'-triphosphate = cyclic pyranopterin phosphate + diphosphate. It functions in the pathway cofactor biosynthesis; molybdopterin biosynthesis. Functionally, catalyzes the conversion of (8S)-3',8-cyclo-7,8-dihydroguanosine 5'-triphosphate to cyclic pyranopterin monophosphate (cPMP). The sequence is that of Cyclic pyranopterin monophosphate synthase 3 (moaC3) from Mycobacterium bovis (strain ATCC BAA-935 / AF2122/97).